We begin with the raw amino-acid sequence, 606 residues long: Putative amino acid transporter AAT1 (606 aa).

The disordered stretch occupies residues 1 to 156 (MNKKYGTSSN…DEEGTNKPKR (156 aa)). 2 stretches are compositionally biased toward basic and acidic residues: residues 12-25 (HDNK…ADKN) and 72-89 (SDKK…ESSK). Acidic residues predominate over residues 140 to 149 (SDGDYTNDEE). Helical transmembrane passes span 175–194 (TVLF…PYVF), 200–225 (ILSI…TSSL), 246–271 (TIID…SNFL), 283–301 (LFTN…ILPI), 313–332 (FLIF…GLQT), 352–372 (HFFK…NACF), 393–412 (VILQ…FSFL), 428–449 (VSIL…PLNF), 522–539 (MWIS…ACKV), 545–567 (VIGI…LIYY), and 579–605 (RYST…LNLI).

Belongs to the amino acid/polyamine transporter 2 family.

The protein localises to the vacuole membrane. Putative amino acid transporter. Probably transports tryptophan. Involved in maintaining the osmotic homeostasis of the digestive vacuole. Important for the timely development and growth of the asexual-stage parasites and male gametocyte maturation. In Plasmodium falciparum (isolate 3D7), this protein is Putative amino acid transporter AAT1.